A 275-amino-acid polypeptide reads, in one-letter code: Endolytic peptidoglycan transglycosylase RlpA (275 aa).

The N-terminal stretch at 1 to 22 (MQIKTITLKLSAVSLGALFFSG) is a signal peptide. Cys-23 carries the N-palmitoyl cysteine lipid modification. Cys-23 carries the S-diacylglycerol cysteine lipid modification. Residues 200 to 275 (IYEGGNFMVQ…AFAGAFVVRE (76 aa)) enclose the SPOR domain.

It belongs to the RlpA family.

It localises to the cell membrane. Its function is as follows. Lytic transglycosylase with a strong preference for naked glycan strands that lack stem peptides. This is Endolytic peptidoglycan transglycosylase RlpA from Campylobacter jejuni subsp. jejuni serotype O:2 (strain ATCC 700819 / NCTC 11168).